The following is a 126-amino-acid chain: C-type natriuretic peptide (126 aa).

Residues 1–23 (MHLSQLLACALLLTLLSLRPSEA) form the signal peptide. A disordered region spans residues 20–71 (PSEAKPGAPPKVPRTPPAEELAEPQAAGGGQKKGDKAPGGGGANLKGDRSRL). Positions 24-73 (KPGAPPKVPRTPPAEELAEPQAAGGGQKKGDKAPGGGGANLKGDRSRLLR) are excised as a propeptide. Pro residues predominate over residues 26-35 (GAPPKVPRTP). Gly residues predominate over residues 46–63 (AGGGQKKGDKAPGGGGAN). Cysteines 110 and 126 form a disulfide.

It belongs to the natriuretic peptide family. Post-translationally, degraded by IDE (in vitro). In the kidney, predominantly expressed in the distal tubular cells (at protein level).

It localises to the secreted. Its function is as follows. Hormone which plays a role in endochondral ossification through regulation of cartilaginous growth plate chondrocytes proliferation and differentiation. May also be vasoactive and natriuretic. Acts by specifically binding and stimulating NPR2 to produce cGMP. Binds the clearance receptor NPR3. The chain is C-type natriuretic peptide (NPPC) from Homo sapiens (Human).